Here is a 607-residue protein sequence, read N- to C-terminus: UvrABC system protein C (607 aa).

One can recognise a GIY-YIG domain in the interval 16-94 (GRPGVYRMFD…IKEWRPPYNI (79 aa)). The UVR domain occupies 203–238 (NALSEELSASMEKASMALEFERAAELRDQISMLRRV).

The protein belongs to the UvrC family. Interacts with UvrB in an incision complex.

The protein resides in the cytoplasm. Functionally, the UvrABC repair system catalyzes the recognition and processing of DNA lesions. UvrC both incises the 5' and 3' sides of the lesion. The N-terminal half is responsible for the 3' incision and the C-terminal half is responsible for the 5' incision. In Ectopseudomonas mendocina (strain ymp) (Pseudomonas mendocina), this protein is UvrABC system protein C.